Reading from the N-terminus, the 69-residue chain is Cytochrome c oxidase subunit 8A, mitochondrial (69 aa).

A mitochondrion-targeting transit peptide spans 1–25; it reads MSVLTSLLLRGLTGSARWLPVPRAK. The SIFI-degron signature appears at 2–19; sequence SVLTSLLLRGLTGSARWL. Topologically, residues 26 to 36 are mitochondrial matrix; that stretch reads VHSMPPEVELG. Residues 37–60 traverse the membrane as a helical segment; the sequence is IMEKAIGLTSCFVSLFLPAGWILS. Over 61 to 69 the chain is Mitochondrial intermembrane; it reads HLEDYKRPE.

This sequence belongs to the cytochrome c oxidase VIII family. In terms of assembly, component of the cytochrome c oxidase (complex IV, CIV), a multisubunit enzyme composed of 14 subunits. The complex is composed of a catalytic core of 3 subunits MT-CO1, MT-CO2 and MT-CO3, encoded in the mitochondrial DNA, and 11 supernumerary subunits COX4I, COX5A, COX5B, COX6A, COX6B, COX6C, COX7A, COX7B, COX7C, COX8 and NDUFA4, which are encoded in the nuclear genome. The complex exists as a monomer or a dimer and forms supercomplexes (SCs) in the inner mitochondrial membrane with NADH-ubiquinone oxidoreductase (complex I, CI) and ubiquinol-cytochrome c oxidoreductase (cytochrome b-c1 complex, complex III, CIII), resulting in different assemblies (supercomplex SCI(1)III(2)IV(1) and megacomplex MCI(2)III(2)IV(2)). In response to mitochondrial stress, the precursor protein is ubiquitinated by the SIFI complex in the cytoplasm before mitochondrial import, leading to its degradation. Within the SIFI complex, UBR4 initiates ubiquitin chain that are further elongated or branched by KCMF1.

The protein localises to the mitochondrion inner membrane. The protein operates within energy metabolism; oxidative phosphorylation. Its function is as follows. Component of the cytochrome c oxidase, the last enzyme in the mitochondrial electron transport chain which drives oxidative phosphorylation. The respiratory chain contains 3 multisubunit complexes succinate dehydrogenase (complex II, CII), ubiquinol-cytochrome c oxidoreductase (cytochrome b-c1 complex, complex III, CIII) and cytochrome c oxidase (complex IV, CIV), that cooperate to transfer electrons derived from NADH and succinate to molecular oxygen, creating an electrochemical gradient over the inner membrane that drives transmembrane transport and the ATP synthase. Cytochrome c oxidase is the component of the respiratory chain that catalyzes the reduction of oxygen to water. Electrons originating from reduced cytochrome c in the intermembrane space (IMS) are transferred via the dinuclear copper A center (CU(A)) of subunit 2 and heme A of subunit 1 to the active site in subunit 1, a binuclear center (BNC) formed by heme A3 and copper B (CU(B)). The BNC reduces molecular oxygen to 2 water molecules using 4 electrons from cytochrome c in the IMS and 4 protons from the mitochondrial matrix. The polypeptide is Cytochrome c oxidase subunit 8A, mitochondrial (COX8A) (Macaca silenus (Lion-tailed macaque)).